A 608-amino-acid chain; its full sequence is Protein Spindly (608 aa).

At M1 the chain carries N-acetylmethionine. Residues 1–445 (MEADITNLRN…LKLKYEPEER (445 aa)) adopt a coiled-coil conformation. Residues 465–487 (PEETEETAAASATEDGVSRLPPH) are disordered. Residues S516, S518, and S558 each carry the phosphoserine modification.

Belongs to the Spindly family. In terms of assembly, interacts with KNTC1 and ZW10. These interactions appear weak and may be transient or indirect. Interacts with dynein intermediate chain and dynactin (DCTN1). Interacts with the catalytically active form of USP45. Monoubiquitinated with'Lys-48' linkage. Deubiquitinated by USP45.

The protein localises to the cytoplasm. The protein resides in the cytoskeleton. Its subcellular location is the microtubule organizing center. It is found in the centrosome. It localises to the chromosome. The protein localises to the centromere. The protein resides in the kinetochore. Its subcellular location is the nucleus. It is found in the spindle pole. Functionally, required for the localization of dynein and dynactin to the mitotic kintochore. Dynein is believed to control the initial lateral interaction between the kinetochore and spindle microtubules and to facilitate the subsequent formation of end-on kinetochore-microtubule attachments mediated by the NDC80 complex. Also required for correct spindle orientation. Does not appear to be required for the removal of spindle assembly checkpoint (SAC) proteins from the kinetochore upon bipolar spindle attachment. Acts as an adapter protein linking the dynein motor complex to various cargos and converts dynein from a non-processive to a highly processive motor in the presence of dynactin. Facilitates the interaction between dynein and dynactin and activates dynein processivity (the ability to move along a microtubule for a long distance without falling off the track). Plays a role in cell migration. This is Protein Spindly (Spdl1) from Mus musculus (Mouse).